The sequence spans 460 residues: Probable fibrosin-1 (460 aa).

Lys8 participates in a covalent cross-link: Glycyl lysine isopeptide (Lys-Gly) (interchain with G-Cter in SUMO2). Disordered stretches follow at residues 40-79 (SLQG…FRPP), 205-311 (FAQK…KEEA), and 406-460 (YSRL…RADR). Over residues 212–223 (GAPPAFASPPDP) the composition is skewed to pro residues. Asymmetric dimethylarginine occurs at positions 229 and 239. Over residues 248-272 (GSDKERPVERREPSITKEEKDRDLP) the composition is skewed to basic and acidic residues. Ser281 carries the phosphoserine modification. The segment covering 288–311 (RAGEEGPRPTKESVRVKEERKEEA) has biased composition (basic and acidic residues). The segment covering 436-453 (APPPLVPAPRPSSPPRGP) has biased composition (pro residues).

In Homo sapiens (Human), this protein is Probable fibrosin-1 (FBRS).